Consider the following 388-residue polypeptide: MKAATLSEAGVSREILVIGSGFAAQQLVKSLRKLDAEQPIRLITADSGDEYNKPDLSHVVSRGCTAAAMTRLSGSDFAEQQRIALVPHCPVLGIDPARRIVMTVQGEFAYGQLVLATGASAARPDLPGSEQLVTLNSQQEYAAAEGPIQQARRILVLGAGLIGCELAMDMASDGREVTLVDLADSPLSALLPAVLSQPLQQALRSQGVSLQFGLGIARIDAQPGDGWRVTLTDGRTSEQDLVIAAIGLKPNLVLAQAAGLAVERGILVDDSLQTSAPHIFALGDCAQWRGQLLPFLQPIVLGANALARTLLGTPTPLTLPPMLVKVKTPRYPLQLAGRTKGEDLAWQCRWNSHGLVAEARAEDGELCGFVVGGDQMSAAFPLLRQLPR.

This sequence belongs to the FAD-dependent oxidoreductase family. FAD is required as a cofactor.

Its subcellular location is the cytoplasm. It catalyses the reaction 2 reduced [nitric oxide reductase rubredoxin domain] + NAD(+) + H(+) = 2 oxidized [nitric oxide reductase rubredoxin domain] + NADH. The protein operates within nitrogen metabolism; nitric oxide reduction. One of at least two accessory proteins for anaerobic nitric oxide (NO) reductase. Reduces the rubredoxin moiety of NO reductase. The protein is Nitric oxide reductase FlRd-NAD(+) reductase of Aeromonas salmonicida (strain A449).